Reading from the N-terminus, the 235-residue chain is TVP38/TMEM64 family inner membrane protein YdjZ (235 aa).

Over 1-13 (MMMMQSRKIWYYR) the chain is Periplasmic. Residues 14 to 34 (ITLIILLFAMLLAWALLPGVH) traverse the membrane as a helical segment. At 35 to 64 (EFINRSVAAFAAVDQQGIERFIQSYGALAA) the chain is on the cytoplasmic side. A helical membrane pass occupies residues 65–85 (VVSFLLMILQAIAAPLPAFLI). Residues 86–95 (TFANASLFGA) are Periplasmic-facing. Residues 90-199 (ASLFGAFWGG…IVYSWAGSML (110 aa)) are VTT domain. A helical membrane pass occupies residues 96–116 (FWGGLLSWTSSMAGAALCFFI). Topologically, residues 117-176 (ARVMGREVVEKLTGKTVLDSMDGFFTRYGKHTILVCRLLPFVPFDPISYAAGLTSIRFRS) are cytoplasmic. Residues 177-197 (FFIATGLGQLPATIVYSWAGS) form a helical membrane-spanning segment. The Periplasmic portion of the chain corresponds to 198-202 (MLTGG). The chain crosses the membrane as a helical span at residues 203–223 (TFWFVTGLFILFALTVVIFMA). At 224-235 (KKIWLERQKRNA) the chain is on the cytoplasmic side.

It belongs to the TVP38/TMEM64 family.

It is found in the cell inner membrane. This chain is TVP38/TMEM64 family inner membrane protein YdjZ (ydjZ), found in Escherichia coli (strain K12).